We begin with the raw amino-acid sequence, 377 residues long: Benzylmalonyl-CoA dehydrogenase (377 aa).

FAD-binding positions include 123-132 (ICMTEPNAGS), 156-158 (WIT), R266, Q277, and 363-365 (TSE).

The protein belongs to the acyl-CoA dehydrogenase family. In terms of assembly, homotetramer. FAD is required as a cofactor.

The catalysed reaction is (2-aminobenzyl)malonyl-CoA + O2 + H(+) = (E)-2-aminocinnamoyl-CoA + H2O2 + CO2. It catalyses the reaction benzylmalonyl-CoA + O2 + H(+) = (E)-cinnamoyl-CoA + H2O2 + CO2. In terms of biological role, involved in degradation of indoleacetate, the most common member of the auxin class of plant hormones. Catalyzes the irreversible oxidative decarboxylation of (2-aminobenzyl)malonyl-CoA to 2-aminocinnamoyl-CoA and CO(2). In vitro, shows high catalytic efficiency with benzylmalonyl-CoA, a chemical analog of the physiological substrate, but otherwise accepts only a few medium-chain alkylmalonyl-CoA compounds as alternative substrates with low activities. The polypeptide is Benzylmalonyl-CoA dehydrogenase (Aromatoleum aromaticum (strain DSM 19018 / LMG 30748 / EbN1) (Azoarcus sp. (strain EbN1))).